A 37-amino-acid chain; its full sequence is Large ribosomal subunit protein bL36c (37 aa).

Belongs to the bacterial ribosomal protein bL36 family.

It is found in the plastid. The protein resides in the chloroplast. In Lolium perenne (Perennial ryegrass), this protein is Large ribosomal subunit protein bL36c.